The primary structure comprises 362 residues: 3-dehydroquinate synthase (362 aa).

NAD(+)-binding positions include 71–76 (DGEQYK), 105–109 (GVVGD), 129–130 (TT), lysine 142, lysine 151, and 169–172 (CLKT). The Zn(2+) site is built by glutamate 184, histidine 247, and histidine 264.

Belongs to the sugar phosphate cyclases superfamily. Dehydroquinate synthase family. It depends on Co(2+) as a cofactor. Zn(2+) serves as cofactor. Requires NAD(+) as cofactor.

It is found in the cytoplasm. It carries out the reaction 7-phospho-2-dehydro-3-deoxy-D-arabino-heptonate = 3-dehydroquinate + phosphate. It functions in the pathway metabolic intermediate biosynthesis; chorismate biosynthesis; chorismate from D-erythrose 4-phosphate and phosphoenolpyruvate: step 2/7. Functionally, catalyzes the conversion of 3-deoxy-D-arabino-heptulosonate 7-phosphate (DAHP) to dehydroquinate (DHQ). In Shigella flexneri serotype 5b (strain 8401), this protein is 3-dehydroquinate synthase.